Consider the following 175-residue polypeptide: Acetyl-CoA decarbonylase/synthase complex subunit epsilon 2 (175 aa).

It belongs to the CdhB family. In terms of assembly, heterotetramer of two alpha and two epsilon subunits. The ACDS complex is made up of alpha, epsilon, beta, gamma and delta subunits with a probable stoichiometry of (alpha(2)epsilon(2))(4)-beta(8)-(gamma(1)delta(1))(8).

Its function is as follows. Part of a complex that catalyzes the reversible cleavage of acetyl-CoA, allowing autotrophic growth from CO(2). The alpha-epsilon subcomponent functions as a carbon monoxide dehydrogenase. The precise role of the epsilon subunit is unclear; it may have a stabilizing role within the alpha(2)epsilon(2) component and/or be involved in electron transfer to FAD during a potential FAD-mediated CO oxidation. This Archaeoglobus fulgidus (strain ATCC 49558 / DSM 4304 / JCM 9628 / NBRC 100126 / VC-16) protein is Acetyl-CoA decarbonylase/synthase complex subunit epsilon 2 (cdhB2).